The sequence spans 148 residues: Flavodoxin (148 aa).

Positions 4 to 145 (VLIVYGSTTG…DVSAWAGRVV (142 aa)) constitute a Flavodoxin-like domain.

Belongs to the flavodoxin family. The cofactor is FMN.

Its function is as follows. Low-potential electron donor to a number of redox enzymes. This chain is Flavodoxin, found in Nitratidesulfovibrio vulgaris (strain DSM 19637 / Miyazaki F) (Desulfovibrio vulgaris).